We begin with the raw amino-acid sequence, 255 residues long: Imidazole glycerol phosphate synthase subunit HisF (255 aa).

Active-site residues include Asp-11 and Asp-130.

Belongs to the HisA/HisF family. Heterodimer of HisH and HisF.

It is found in the cytoplasm. The catalysed reaction is 5-[(5-phospho-1-deoxy-D-ribulos-1-ylimino)methylamino]-1-(5-phospho-beta-D-ribosyl)imidazole-4-carboxamide + L-glutamine = D-erythro-1-(imidazol-4-yl)glycerol 3-phosphate + 5-amino-1-(5-phospho-beta-D-ribosyl)imidazole-4-carboxamide + L-glutamate + H(+). It participates in amino-acid biosynthesis; L-histidine biosynthesis; L-histidine from 5-phospho-alpha-D-ribose 1-diphosphate: step 5/9. Its function is as follows. IGPS catalyzes the conversion of PRFAR and glutamine to IGP, AICAR and glutamate. The HisF subunit catalyzes the cyclization activity that produces IGP and AICAR from PRFAR using the ammonia provided by the HisH subunit. This Prochlorococcus marinus subsp. pastoris (strain CCMP1986 / NIES-2087 / MED4) protein is Imidazole glycerol phosphate synthase subunit HisF.